The primary structure comprises 439 residues: tRNA-2-methylthio-N(6)-dimethylallyladenosine synthase (439 aa).

An MTTase N-terminal domain is found at 1 to 117; it reads MKFYIRTFGC…IGNLVKRALN (117 aa). Residues Cys-10, Cys-46, Cys-80, Cys-153, Cys-157, and Cys-160 each coordinate [4Fe-4S] cluster. The Radical SAM core domain maps to 139–371; sequence PISKHHAWIT…MELQKRINLE (233 aa). Residues 369-436 enclose the TRAM domain; it reads NLEENEKYLE…PGPLYGEVVN (68 aa).

This sequence belongs to the methylthiotransferase family. MiaB subfamily. In terms of assembly, monomer. The cofactor is [4Fe-4S] cluster.

It is found in the cytoplasm. It carries out the reaction N(6)-dimethylallyladenosine(37) in tRNA + (sulfur carrier)-SH + AH2 + 2 S-adenosyl-L-methionine = 2-methylsulfanyl-N(6)-dimethylallyladenosine(37) in tRNA + (sulfur carrier)-H + 5'-deoxyadenosine + L-methionine + A + S-adenosyl-L-homocysteine + 2 H(+). In terms of biological role, catalyzes the methylthiolation of N6-(dimethylallyl)adenosine (i(6)A), leading to the formation of 2-methylthio-N6-(dimethylallyl)adenosine (ms(2)i(6)A) at position 37 in tRNAs that read codons beginning with uridine. The polypeptide is tRNA-2-methylthio-N(6)-dimethylallyladenosine synthase (Petrotoga mobilis (strain DSM 10674 / SJ95)).